The chain runs to 1021 residues: Peroxisomal ATPase PEX6 (1021 aa).

An ATP-binding site is contributed by 763 to 770 (GPPGTGKT).

Belongs to the AAA ATPase family. Interacts with PEX1; forming the PEX1-PEX6 AAA ATPase complex, which is composed of a heterohexamer formed by a trimer of PEX1-PEX6 dimers.

The protein localises to the cytoplasm. It is found in the cytosol. Its subcellular location is the peroxisome membrane. It catalyses the reaction ATP + H2O = ADP + phosphate + H(+). Functionally, component of the PEX1-PEX6 AAA ATPase complex, a protein dislocase complex that mediates the ATP-dependent extraction of the PEX5 receptor from peroxisomal membranes, an essential step for PEX5 recycling. Specifically recognizes PEX5 monoubiquitinated at 'Cys-6', and pulls it out of the peroxisome lumen through the PEX2-PEX10-PEX12 retrotranslocation channel. Extraction by the PEX1-PEX6 AAA ATPase complex is accompanied by unfolding of the TPR repeats and release of bound cargo from PEX5. The sequence is that of Peroxisomal ATPase PEX6 (PEX6) from Eremothecium gossypii (strain ATCC 10895 / CBS 109.51 / FGSC 9923 / NRRL Y-1056) (Yeast).